We begin with the raw amino-acid sequence, 280 residues long: Putative ABC transporter ATP-binding protein MTH_133 (280 aa).

Residues 6–241 (IEAVDIRYTY…IDTIRGANLR (236 aa)) form the ABC transporter domain. Residue 39–46 (GPNGAGKS) participates in ATP binding.

This sequence belongs to the ABC transporter superfamily.

It localises to the cell membrane. In terms of biological role, probably part of an ABC transporter complex. Responsible for energy coupling to the transport system. The chain is Putative ABC transporter ATP-binding protein MTH_133 from Methanothermobacter thermautotrophicus (strain ATCC 29096 / DSM 1053 / JCM 10044 / NBRC 100330 / Delta H) (Methanobacterium thermoautotrophicum).